Here is a 390-residue protein sequence, read N- to C-terminus: Chalcone synthase (390 aa).

Cysteine 164 is a catalytic residue.

The protein belongs to the thiolase-like superfamily. Chalcone/stilbene synthases family.

It catalyses the reaction (E)-4-coumaroyl-CoA + 3 malonyl-CoA + 3 H(+) = 2',4,4',6'-tetrahydroxychalcone + 3 CO2 + 4 CoA. Its pathway is secondary metabolite biosynthesis; flavonoid biosynthesis. Functionally, the primary product of this enzyme is 4,2',4',6'-tetrahydroxychalcone (also termed naringenin-chalcone or chalcone) which can under specific conditions spontaneously isomerize into naringenin. The protein is Chalcone synthase (CHS) of Antirrhinum majus (Garden snapdragon).